The primary structure comprises 196 residues: Peptide deformylase (196 aa).

Fe cation contacts are provided by C103 and H145. E146 is an active-site residue. H149 contacts Fe cation.

The protein belongs to the polypeptide deformylase family. The cofactor is Fe(2+).

It catalyses the reaction N-terminal N-formyl-L-methionyl-[peptide] + H2O = N-terminal L-methionyl-[peptide] + formate. In terms of biological role, removes the formyl group from the N-terminal Met of newly synthesized proteins. Requires at least a dipeptide for an efficient rate of reaction. N-terminal L-methionine is a prerequisite for activity but the enzyme has broad specificity at other positions. The polypeptide is Peptide deformylase (Rhodococcus opacus (strain B4)).